Consider the following 130-residue polypeptide: Small ribosomal subunit protein uS8 (130 aa).

The protein belongs to the universal ribosomal protein uS8 family. In terms of assembly, part of the 30S ribosomal subunit. Contacts proteins S5 and S12.

Its function is as follows. One of the primary rRNA binding proteins, it binds directly to 16S rRNA central domain where it helps coordinate assembly of the platform of the 30S subunit. The sequence is that of Small ribosomal subunit protein uS8 from Shewanella sp. (strain MR-7).